A 252-amino-acid chain; its full sequence is uncharacterized protein (252 aa).

Positions 1–22 (MIHSKRLRLWLYLVLLAVFISA) are cleaved as a signal peptide. The N-palmitoyl cysteine moiety is linked to residue Cys23. Residue Cys23 is the site of S-diacylglycerol cysteine attachment.

Belongs to the staphylococcal tandem lipoprotein family.

The protein resides in the cell membrane. This is an uncharacterized protein from Staphylococcus aureus (strain MW2).